The sequence spans 276 residues: Inositol-1-monophosphatase ImpA (276 aa).

Mg(2+) contacts are provided by glutamate 74, aspartate 90, isoleucine 92, and aspartate 93. Glutamate 74 is a binding site for substrate. Residues 92 to 95 (IDGT), arginine 192, and aspartate 221 contribute to the substrate site. Aspartate 221 is a binding site for Mg(2+).

The protein belongs to the inositol monophosphatase superfamily. Mg(2+) serves as cofactor.

It carries out the reaction a myo-inositol phosphate + H2O = myo-inositol + phosphate. Its pathway is polyol metabolism; myo-inositol biosynthesis; myo-inositol from D-glucose 6-phosphate: step 2/2. Its function is as follows. Catalyzes the dephosphorylation of inositol 1-phosphate (I-1-P) to yield free myo-inositol, a key metabolite in mycobacteria. This Mycolicibacterium smegmatis (strain ATCC 700084 / mc(2)155) (Mycobacterium smegmatis) protein is Inositol-1-monophosphatase ImpA (impA).